The sequence spans 452 residues: Mitochondrial import inner membrane translocase subunit TIM44 (452 aa).

Threonine 128 is subject to Phosphothreonine. Residue 166 to 173 participates in ATP binding; sequence GGEKLGRT. Serine 180 is subject to Phosphoserine. Lysine 217 is modified (N6-succinyllysine).

The protein belongs to the Tim44 family. In terms of assembly, probable component of the PAM complex at least composed of a mitochondrial HSP70 protein, GRPEL1 or GRPEL2, TIMM44, TIMM16/PAM16 and TIMM14/DNAJC19. The complex interacts with the TIMM23 component of the TIM23 complex. Interacts with SLC25A4/ANT1 and SLC25A5/ANT2; leading to inhibit the presequence translocase TIMM23, thereby promoting stabilization of PINK1.

It localises to the mitochondrion inner membrane. The protein resides in the mitochondrion matrix. Functionally, essential component of the PAM complex, a complex required for the translocation of transit peptide-containing proteins from the inner membrane into the mitochondrial matrix in an ATP-dependent manner. Recruits mitochondrial HSP70 to drive protein translocation into the matrix using ATP as an energy source. In Homo sapiens (Human), this protein is Mitochondrial import inner membrane translocase subunit TIM44 (TIMM44).